Consider the following 258-residue polypeptide: Bidirectional sugar transporter SWEET9 (258 aa).

At 1–7 (MFLKVHE) the chain is on the extracellular side. Residues 8 to 28 (IAFLFGLLGNIVSFGVFLSPV) traverse the membrane as a helical segment. Positions 10–96 (FLFGLLGNIV…FLYILYAPRE (87 aa)) constitute a MtN3/slv 1 domain. Over 29–42 (PTFYGIYKKKSSKG) the chain is Cytoplasmic. Residues 43–63 (FQSIPYICALASATLLLYYGI) traverse the membrane as a helical segment. Topologically, residues 64–69 (MKTHAY) are extracellular. A helical transmembrane segment spans residues 70 to 90 (LIISINTFGCFIEISYLFLYI). At 91 to 103 (LYAPREAKISTLK) the chain is on the cytoplasmic side. Residues 104-124 (LIVICNIGGLGLLILLVNLLV) form a helical membrane-spanning segment. The Extracellular segment spans residues 125 to 131 (PKQHRVS). The helical transmembrane segment at 132–152 (TVGWVCAAYSLAVFASPLSVM) threads the bilayer. One can recognise a MtN3/slv 2 domain in the interval 132–216 (TVGWVCAAYS…ILYMMYQGST (85 aa)). Residues 153–165 (RKVIKTKSVEYMP) lie on the Cytoplasmic side of the membrane. Residues 166 to 186 (FLLSLSLTLNAVMWFFYGLLI) form a helical membrane-spanning segment. The Extracellular portion of the chain corresponds to 187–189 (KDK). The helical transmembrane segment at 190–210 (FIAMPNILGFLFGVAQMILYM) threads the bilayer. Topologically, residues 211–258 (MYQGSTKTDLPTENQLANKTDVNEVPIVAVELPDVGSDNVEGSVRPMK) are cytoplasmic.

The protein belongs to the SWEET sugar transporter family. As to quaternary structure, forms heterooligomers with SWEET1, SWEET5, SWEET8, SWEET11, SWEET13, SWEET16 and SWEET17. As to expression, specifically expressed in nectaries, mostly in the lower half of nectary parenchyma.

It localises to the cell membrane. Its subcellular location is the cytoplasmic vesicle membrane. The protein localises to the golgi apparatus. The protein resides in the trans-Golgi network membrane. In terms of biological role, mediates both low-affinity uptake and efflux of sugar across the plasma membrane. Nectary-specific sugar transporter required for nectar production by mediating the secretion of sucrose from the nectary parenchyma to the extracellular space. This is Bidirectional sugar transporter SWEET9 from Arabidopsis thaliana (Mouse-ear cress).